The sequence spans 208 residues: ATP-dependent Clp protease proteolytic subunit (208 aa).

S101 functions as the Nucleophile in the catalytic mechanism. H126 is a catalytic residue.

The protein belongs to the peptidase S14 family. As to quaternary structure, component of the chloroplastic Clp protease core complex.

It localises to the plastid. The protein localises to the chloroplast stroma. The catalysed reaction is Hydrolysis of proteins to small peptides in the presence of ATP and magnesium. alpha-casein is the usual test substrate. In the absence of ATP, only oligopeptides shorter than five residues are hydrolyzed (such as succinyl-Leu-Tyr-|-NHMec, and Leu-Tyr-Leu-|-Tyr-Trp, in which cleavage of the -Tyr-|-Leu- and -Tyr-|-Trp bonds also occurs).. Its function is as follows. Cleaves peptides in various proteins in a process that requires ATP hydrolysis. Has a chymotrypsin-like activity. Plays a major role in the degradation of misfolded proteins. The protein is ATP-dependent Clp protease proteolytic subunit of Nephroselmis olivacea (Green alga).